The following is a 431-amino-acid chain: Mitochondrial distribution and morphology protein 12 (431 aa).

The 431-residue stretch at 1 to 431 (MSIDLNWETL…VYPSFWTFLV (431 aa)) folds into the SMP-LTD domain. 2 disordered regions span residues 68–153 (DFYE…GVST) and 209–289 (QSHT…PKPE). Over residues 69 to 96 (FYEDLDDDDGGSDEDDEGSNSCQTDEEN) the composition is skewed to acidic residues. Residues 97-113 (EAAKTLRERRKMDRVER) show a composition bias toward basic and acidic residues. Positions 115 to 129 (ANGSSNVSNPPSYTD) are enriched in polar residues. The segment covering 241–252 (SASTLAVSSSTT) has biased composition (low complexity).

This sequence belongs to the MDM12 family. As to quaternary structure, component of the ER-mitochondria encounter structure (ERMES) or MDM complex, composed of mmm1, mdm10, mdm12 and mdm34. A mmm1 homodimer associates with one molecule of mdm12 on each side in a pairwise head-to-tail manner, and the SMP-LTD domains of mmm1 and mdm12 generate a continuous hydrophobic tunnel for phospholipid trafficking.

It is found in the mitochondrion outer membrane. The protein resides in the endoplasmic reticulum membrane. In terms of biological role, component of the ERMES/MDM complex, which serves as a molecular tether to connect the endoplasmic reticulum (ER) and mitochondria. Components of this complex are involved in the control of mitochondrial shape and protein biogenesis, and function in nonvesicular lipid trafficking between the ER and mitochondria. Mdm12 is required for the interaction of the ER-resident membrane protein mmm1 and the outer mitochondrial membrane-resident beta-barrel protein mdm10. The mdm12-mmm1 subcomplex functions in the major beta-barrel assembly pathway that is responsible for biogenesis of all mitochondrial outer membrane beta-barrel proteins, and acts in a late step after the SAM complex. The mdm10-mdm12-mmm1 subcomplex further acts in the TOM40-specific pathway after the action of the mdm12-mmm1 complex. Essential for establishing and maintaining the structure of mitochondria and maintenance of mtDNA nucleoids. The chain is Mitochondrial distribution and morphology protein 12 from Sclerotinia sclerotiorum (strain ATCC 18683 / 1980 / Ss-1) (White mold).